A 202-amino-acid chain; its full sequence is Small ribosomal subunit protein uS4c (202 aa).

Residues 90-153 (MRLDNVIFRL…KSEAIISKNI (64 aa)) form the S4 RNA-binding domain.

It belongs to the universal ribosomal protein uS4 family. Part of the 30S ribosomal subunit. Contacts protein S5. The interaction surface between S4 and S5 is involved in control of translational fidelity.

Its subcellular location is the plastid. The protein resides in the chloroplast. In terms of biological role, one of the primary rRNA binding proteins, it binds directly to 16S rRNA where it nucleates assembly of the body of the 30S subunit. With S5 and S12 plays an important role in translational accuracy. In Hypopterygium laricinum (Moss), this protein is Small ribosomal subunit protein uS4c (rps4).